Here is a 651-residue protein sequence, read N- to C-terminus: Protein cueball (651 aa).

Residues 1–21 (MILRLFILLSIITVYLQLSVG) form the signal peptide. Residues 22-540 (IQQQFEFAIT…VCLAPNAWTG (519 aa)) lie on the Extracellular side of the membrane. 3 N-linked (GlcNAc...) asparagine glycosylation sites follow: Asn77, Asn102, and Asn114. LDL-receptor class B repeat units lie at residues 115-162 (RTIY…DICG), 163-207 (RKLY…DQGA), and 208-253 (KRIF…TRNA). N-linked (GlcNAc...) asparagine glycosylation occurs at Asn183. The disordered stretch occupies residues 290–311 (VEGEEGTGAMDDNDIWPVGDFE). Asn324 carries N-linked (GlcNAc...) asparagine glycosylation. EGF-like domains are found at residues 374–408 (QLDELQREHCLGGGTYYPQQKFCVCVPGYKGTRCE), 409–440 (TNECHNFCVHGTCQISEMGYPKCYCQPGYSGE), and 443–480 (EVKKCLNFCQNGGDCQLDELTGEASCQCPSNFGGLRCE). Cystine bridges form between Cys383–Cys396, Cys398–Cys407, Cys412–Cys421, Cys416–Cys431, Cys447–Cys457, Cys451–Cys468, and Cys470–Cys479. Residues Asn482 and Asn499 are each glycosylated (N-linked (GlcNAc...) asparagine). A helical transmembrane segment spans residues 541–561 (SVLMPLMISLILILLLLTIFI). The Cytoplasmic portion of the chain corresponds to 562 to 651 (HGLRRLYKPK…LIHNMEDDLY (90 aa)).

The protein belongs to the cueball family.

The protein resides in the cell membrane. In terms of biological role, has a role in spermatogenesis and oogenesis. This is Protein cueball from Drosophila willistoni (Fruit fly).